The following is a 218-amino-acid chain: tRNA (guanine-N(7)-)-methyltransferase (218 aa).

S-adenosyl-L-methionine contacts are provided by glutamate 45, glutamate 70, aspartate 97, and aspartate 119. Aspartate 119 is a catalytic residue. Lysine 123 provides a ligand contact to substrate. The interval 125–130 (RHEKRR) is interaction with RNA. Substrate-binding positions include aspartate 155 and 195 to 198 (TEYE).

It belongs to the class I-like SAM-binding methyltransferase superfamily. TrmB family.

It catalyses the reaction guanosine(46) in tRNA + S-adenosyl-L-methionine = N(7)-methylguanosine(46) in tRNA + S-adenosyl-L-homocysteine. It functions in the pathway tRNA modification; N(7)-methylguanine-tRNA biosynthesis. Its function is as follows. Catalyzes the formation of N(7)-methylguanine at position 46 (m7G46) in tRNA. This chain is tRNA (guanine-N(7)-)-methyltransferase, found in Lactobacillus acidophilus (strain ATCC 700396 / NCK56 / N2 / NCFM).